The following is a 310-amino-acid chain: tRNA pseudouridine synthase B (310 aa).

The active-site Nucleophile is Asp49.

This sequence belongs to the pseudouridine synthase TruB family. Type 1 subfamily.

The enzyme catalyses uridine(55) in tRNA = pseudouridine(55) in tRNA. Responsible for synthesis of pseudouridine from uracil-55 in the psi GC loop of transfer RNAs. The sequence is that of tRNA pseudouridine synthase B from Rhizobium etli (strain ATCC 51251 / DSM 11541 / JCM 21823 / NBRC 15573 / CFN 42).